The sequence spans 299 residues: 4-diphosphocytidyl-2-C-methyl-D-erythritol kinase (299 aa).

Lys-18 is a catalytic residue. 104 to 114 (PIASGIGGGSS) serves as a coordination point for ATP. Residue Asp-146 is part of the active site.

Belongs to the GHMP kinase family. IspE subfamily.

It catalyses the reaction 4-CDP-2-C-methyl-D-erythritol + ATP = 4-CDP-2-C-methyl-D-erythritol 2-phosphate + ADP + H(+). It participates in isoprenoid biosynthesis; isopentenyl diphosphate biosynthesis via DXP pathway; isopentenyl diphosphate from 1-deoxy-D-xylulose 5-phosphate: step 3/6. Its function is as follows. Catalyzes the phosphorylation of the position 2 hydroxy group of 4-diphosphocytidyl-2C-methyl-D-erythritol. In Brucella abortus biovar 1 (strain 9-941), this protein is 4-diphosphocytidyl-2-C-methyl-D-erythritol kinase.